A 145-amino-acid polypeptide reads, in one-letter code: Ribosomal RNA large subunit methyltransferase H (145 aa).

S-adenosyl-L-methionine contacts are provided by residues Leu64, Gly93, and Leu112–Phe117.

This sequence belongs to the RNA methyltransferase RlmH family. Homodimer.

It is found in the cytoplasm. It carries out the reaction pseudouridine(1915) in 23S rRNA + S-adenosyl-L-methionine = N(3)-methylpseudouridine(1915) in 23S rRNA + S-adenosyl-L-homocysteine + H(+). Its function is as follows. Specifically methylates the pseudouridine at position 1915 (m3Psi1915) in 23S rRNA. This is Ribosomal RNA large subunit methyltransferase H from Prochlorococcus marinus (strain SARG / CCMP1375 / SS120).